Consider the following 217-residue polypeptide: Probable transaldolase (217 aa).

Residue Lys-83 is the Schiff-base intermediate with substrate of the active site.

Belongs to the transaldolase family. Type 3B subfamily.

It localises to the cytoplasm. The enzyme catalyses D-sedoheptulose 7-phosphate + D-glyceraldehyde 3-phosphate = D-erythrose 4-phosphate + beta-D-fructose 6-phosphate. The protein operates within carbohydrate degradation; pentose phosphate pathway; D-glyceraldehyde 3-phosphate and beta-D-fructose 6-phosphate from D-ribose 5-phosphate and D-xylulose 5-phosphate (non-oxidative stage): step 2/3. In terms of biological role, transaldolase is important for the balance of metabolites in the pentose-phosphate pathway. In Caldicellulosiruptor saccharolyticus (strain ATCC 43494 / DSM 8903 / Tp8T 6331), this protein is Probable transaldolase.